Consider the following 650-residue polypeptide: L-aspartate N-monooxygenase (nitrosuccinate-forming) (650 aa).

The protein belongs to the nitrosuccinic acid synthase family. FAD serves as cofactor.

It carries out the reaction L-aspartate + 3 NADPH + 3 O2 + 2 H(+) = 2-nitrobutanedioate + 3 NADP(+) + 4 H2O. Its function is as follows. Involved in the biosynthesis of desferrioxamine derivatives which have iron-binding properties and may act as siderophores. Catalyzes the iterative oxidation of L-aspartic acid to nitrosuccinic acid (2-nitrobutanedioate) via N-hydroxyaspartic acid and nitrososuccinic acid. The sequence is that of L-aspartate N-monooxygenase (nitrosuccinate-forming) from Streptomyces davaonensis (strain DSM 101723 / JCM 4913 / KCC S-0913 / 768).